Consider the following 398-residue polypeptide: Carbamoyl phosphate synthase small chain (398 aa).

Positions 1–207 (MIQTISSSRP…KGYGTNNVHN (207 aa)) are CPSase. L-glutamine-binding residues include Ser-60, Gly-257, and Gly-259. Residues 209–397 (HIVAIDYGIK…CDLIMNHKKI (189 aa)) form the Glutamine amidotransferase type-1 domain. The active-site Nucleophile is the Cys-286. Leu-287, Gln-290, Asn-328, Gly-330, and Phe-331 together coordinate L-glutamine. Residues His-370 and Glu-372 contribute to the active site.

This sequence belongs to the CarA family. As to quaternary structure, composed of two chains; the small (or glutamine) chain promotes the hydrolysis of glutamine to ammonia, which is used by the large (or ammonia) chain to synthesize carbamoyl phosphate. Tetramer of heterodimers (alpha,beta)4.

The enzyme catalyses hydrogencarbonate + L-glutamine + 2 ATP + H2O = carbamoyl phosphate + L-glutamate + 2 ADP + phosphate + 2 H(+). It catalyses the reaction L-glutamine + H2O = L-glutamate + NH4(+). Its pathway is amino-acid biosynthesis; L-arginine biosynthesis; carbamoyl phosphate from bicarbonate: step 1/1. It functions in the pathway pyrimidine metabolism; UMP biosynthesis via de novo pathway; (S)-dihydroorotate from bicarbonate: step 1/3. In terms of biological role, small subunit of the glutamine-dependent carbamoyl phosphate synthetase (CPSase). CPSase catalyzes the formation of carbamoyl phosphate from the ammonia moiety of glutamine, carbonate, and phosphate donated by ATP, constituting the first step of 2 biosynthetic pathways, one leading to arginine and/or urea and the other to pyrimidine nucleotides. The small subunit (glutamine amidotransferase) binds and cleaves glutamine to supply the large subunit with the substrate ammonia. The chain is Carbamoyl phosphate synthase small chain from Bartonella tribocorum (strain CIP 105476 / IBS 506).